Here is a 209-residue protein sequence, read N- to C-terminus: Molybdenum cofactor guanylyltransferase (209 aa).

GTP-binding positions include 14-16, K31, and D104; that span reads LAG. D104 serves as a coordination point for Mg(2+).

It belongs to the MobA family. As to quaternary structure, monomer. Mg(2+) serves as cofactor.

Its subcellular location is the cytoplasm. The catalysed reaction is Mo-molybdopterin + GTP + H(+) = Mo-molybdopterin guanine dinucleotide + diphosphate. Functionally, transfers a GMP moiety from GTP to Mo-molybdopterin (Mo-MPT) cofactor (Moco or molybdenum cofactor) to form Mo-molybdopterin guanine dinucleotide (Mo-MGD) cofactor. This is Molybdenum cofactor guanylyltransferase from Helicobacter pylori (strain J99 / ATCC 700824) (Campylobacter pylori J99).